Consider the following 443-residue polypeptide: Probable 26S proteasome regulatory subunit 4 (443 aa).

The interval 1-53 is disordered; the sequence is MGQQQSGFGGRGNDRGAGDGEKKEKKKYEAPIPSRIGKKKKGSKGPDAASKLP. Basic and acidic residues predominate over residues 12–29; it reads GNDRGAGDGEKKEKKKYE. Residue 229-236 participates in ATP binding; the sequence is GCPGTGKT.

Belongs to the AAA ATPase family.

The protein localises to the cytoplasm. Its subcellular location is the nucleus. The 26S proteasome is involved in the ATP-dependent degradation of ubiquitinated proteins. The regulatory (or ATPase) complex confers ATP dependency and substrate specificity to the 26S complex. May play a role in the degradation of microtubule severing protein mei-1. This Caenorhabditis elegans protein is Probable 26S proteasome regulatory subunit 4 (rpt-2).